Here is a 559-residue protein sequence, read N- to C-terminus: Non-homologous end joining factor IFFO1 (559 aa).

Positions 21–57 are disordered; sequence GPLGDSLGGDHFAGGGDLPPAPLSPAGPAAYSPPGPG. A compositionally biased stretch (pro residues) spans 39–57; the sequence is PPAPLSPAGPAAYSPPGPG. Residues 65–116 are LMNA binding; the sequence is ALRNDLGSNINVLKTLNLRFRCFLAKVHELERRNRLLEKQLQQALEEGKQGR. Positions 73–526 constitute an IF rod domain; that stretch reads NINVLKTLNL…RLITQSGDRK (454 aa). Positions 85 to 117 form a coiled coil; sequence RCFLAKVHELERRNRLLEKQLQQALEEGKQGRR. The interval 158–187 is disordered; that stretch reads SPARSPAGPLAPSAASLSSSSTSTSTTYSS. Positions 237–301 form a coiled coil; sequence EIRALYNVLA…LKVEQLKAEL (65 aa). The disordered stretch occupies residues 360 to 394; sequence SMGGRKRERKAAVEEDTSLSESEGPRQPDGDEEES. The tract at residues 450 to 525 is XCCR4 binding. Required for localization to the double-strand breaks (DSBs); it reads EQEDSLEKVI…RRLITQSGDR (76 aa). Positions 455 to 501 form a coiled coil; the sequence is LEKVIKDTESLFKTREKEYQETIDQIELELATAKNDMNRHLHEYMEM. The segment at 520 to 559 is disordered; it reads TQSGDRKSPAFTAVPLSDPPPPPSEAEDSDRDVSSDSSMR. Residues 550–559 are compositionally biased toward basic and acidic residues; sequence RDVSSDSSMR.

Belongs to the intermediate filament family. As to quaternary structure, forms a heterotetramer with XRCC4. The interaction with XRCC4 is direct, involves LIG4-free XRCC4 and leads to relocalization of IFFO1 at the double-strand break (DSB) sites. Interacts with LMNA; the interaction forms an interior nucleoskeleton and the recruitment to DNA double-strand breaks. In terms of tissue distribution, ubiquitously expressed.

Its subcellular location is the nucleus. The protein localises to the nucleoplasm. It localises to the nucleus inner membrane. It is found in the nucleus matrix. Its function is as follows. Nuclear matrix protein involved in the immobilization of broken DNA ends and the suppression of chromosome translocation during DNA double-strand breaks (DSBs). Interacts with the nuclear lamina component LMNA, resulting in the formation of a nucleoskeleton that relocalizes to the DSB sites in a XRCC4-dependent manner and promotes the immobilization of the broken ends, thereby preventing chromosome translocation. Acts as a scaffold that allows the DNA repair protein XRCC4 and LMNA to assemble into a complex at the DSB sites. This chain is Non-homologous end joining factor IFFO1, found in Homo sapiens (Human).